The sequence spans 201 residues: Ras-related protein Rab-1B (201 aa).

M1 carries the post-translational modification N-acetylmethionine. GTP contacts are provided by S17, G18, V19, G20, K21, S22, C23, Y33, T34, E35, S36, S39, and T40. Position 22 (S22) interacts with Mg(2+). The short motif at 30 to 45 is the Switch 1 element; the sequence is DDTYTESYISTIGVDF. Mg(2+) is bound by residues T40 and D63. Residues 64 to 83 are switch 2 region; required for interaction with REP1/CHM; it reads TAGQERFRTITSSYYRGAHG. Residues 65–80 carry the Switch 2 motif; that stretch reads AGQERFRTITSSYYRG. GTP-binding residues include G66, N121, K122, D124, S151, A152, and K153. Residues 174-201 form a disordered region; that stretch reads GPGAASGGERPNLKIDSTPVKPAGGGCC. S-geranylgeranyl cysteine attachment occurs at residues C200 and C201. The residue at position 201 (C201) is a Cysteine methyl ester.

The protein belongs to the small GTPase superfamily. Rab family. As to quaternary structure, interacts with MICAL1 and MICAL2. Interacts (in GTP-bound form) with MICALCL, MICAL1 and MILCAL3. Interacts with GDI1; the interaction requires the GDP-bound state. Interacts with CHM/REP1; the interaction requires the GDP-bound form and is necessary for prenylation by GGTase II. Interacts with RabGAP TBC1D20. Interacts (in GDP-bound form) with lipid phosphatase MTMR6 (via GRAM domain); the interaction regulates MTMR6 recruitment to the endoplasmic reticulum-Golgi intermediate compartment. Interacts (in GDP-bound form) with lipid phosphatase MTMR7. It depends on Mg(2+) as a cofactor. In terms of processing, prenylated; by GGTase II, only after interaction of the substrate with Rab escort protein 1 (REP1).

Its subcellular location is the cytoplasm. The protein resides in the membrane. The protein localises to the preautophagosomal structure membrane. It is found in the perinuclear region. It catalyses the reaction GTP + H2O = GDP + phosphate + H(+). Regulated by guanine nucleotide exchange factors (GEFs) which promote the exchange of bound GDP for free GTP. Regulated by GTPase activating proteins (GAPs) including TBC1D20 which increases the GTP hydrolysis activity. Inhibited by GDP dissociation inhibitors (GDIs). Its function is as follows. The small GTPases Rab are key regulators of intracellular membrane trafficking, from the formation of transport vesicles to their fusion with membranes. Rabs cycle between an inactive GDP-bound form and an active GTP-bound form that is able to recruit to membranes different set of downstream effectors directly responsible for vesicle formation, movement, tethering and fusion. Plays a role in the initial events of the autophagic vacuole development which take place at specialized regions of the endoplasmic reticulum. Regulates vesicular transport between the endoplasmic reticulum and successive Golgi compartments. Required to modulate the compacted morphology of the Golgi. Promotes the recruitment of lipid phosphatase MTMR6 to the endoplasmic reticulum-Golgi intermediate compartment. This chain is Ras-related protein Rab-1B (RAB1B), found in Macaca fascicularis (Crab-eating macaque).